Consider the following 651-residue polypeptide: Probable replication restart protein PriA (651 aa).

8 residues coordinate Zn(2+): C371, C374, C380, C383, C399, C402, C411, and C414.

This sequence belongs to the helicase family. PriA subfamily. In terms of assembly, component of the replication restart primosome. Zn(2+) is required as a cofactor.

Functionally, initiates the restart of stalled replication forks, which reloads the replicative helicase on sites other than the origin of replication. Recognizes and binds to abandoned replication forks and remodels them to uncover a helicase loading site. Promotes assembly of the primosome at these replication forks. The protein is Probable replication restart protein PriA of Mycobacterium leprae (strain TN).